The sequence spans 462 residues: tRNA modification GTPase MnmE (462 aa).

R34, E92, and K131 together coordinate (6S)-5-formyl-5,6,7,8-tetrahydrofolate. The TrmE-type G domain occupies 227–386 (GLQVVIAGKP…LIDAITAHAG (160 aa)). Position 237 (N237) interacts with K(+). GTP contacts are provided by residues 237–242 (NAGKSS), 256–262 (TDIAGTT), and 281–284 (DTAG). Position 241 (S241) interacts with Mg(2+). Residues T256, I258, and T261 each contribute to the K(+) site. A Mg(2+)-binding site is contributed by T262. Residue K462 participates in (6S)-5-formyl-5,6,7,8-tetrahydrofolate binding.

It belongs to the TRAFAC class TrmE-Era-EngA-EngB-Septin-like GTPase superfamily. TrmE GTPase family. Homodimer. Heterotetramer of two MnmE and two MnmG subunits. K(+) serves as cofactor.

Its subcellular location is the cytoplasm. Its function is as follows. Exhibits a very high intrinsic GTPase hydrolysis rate. Involved in the addition of a carboxymethylaminomethyl (cmnm) group at the wobble position (U34) of certain tRNAs, forming tRNA-cmnm(5)s(2)U34. This is tRNA modification GTPase MnmE from Acinetobacter baylyi (strain ATCC 33305 / BD413 / ADP1).